The primary structure comprises 163 residues: Single-stranded DNA-binding protein 2 (163 aa).

Residues M1–E104 form the SSB domain. The segment at R109–F163 is disordered. A compositionally biased stretch (low complexity) spans G119 to S130. Over residues Y131–N140 the composition is skewed to polar residues. Residues D158–F163 carry the Important for interaction with partner proteins motif.

In terms of assembly, homotetramer.

In terms of biological role, plays an important role in DNA replication, recombination and repair. Binds to ssDNA and to an array of partner proteins to recruit them to their sites of action during DNA metabolism. The sequence is that of Single-stranded DNA-binding protein 2 (ssb2) from Streptococcus pyogenes serotype M6 (strain ATCC BAA-946 / MGAS10394).